The sequence spans 160 residues: MHTRAIYPGTFDPVTNGHADLIERAAKLFKHVVIGIALNPSKKPRFTLDERIELLKTVTAHLDNVEVVGFSGLLVDFAKEQQASVLVRGLRAVSDFEYEFQLANMNRRLSPDLESVFLTPAEENSFISSTLVKEVAHHGGDVSQFVHIKVANALMKKEQG.

Threonine 10 serves as a coordination point for substrate. Residues 10-11 (TF) and histidine 18 contribute to the ATP site. The substrate site is built by lysine 42, leucine 74, and arginine 88. ATP contacts are provided by residues 89–91 (GLR), glutamate 99, and 124–130 (NSFISST).

The protein belongs to the bacterial CoaD family. Homohexamer. Mg(2+) serves as cofactor.

It is found in the cytoplasm. It catalyses the reaction (R)-4'-phosphopantetheine + ATP + H(+) = 3'-dephospho-CoA + diphosphate. It functions in the pathway cofactor biosynthesis; coenzyme A biosynthesis; CoA from (R)-pantothenate: step 4/5. Reversibly transfers an adenylyl group from ATP to 4'-phosphopantetheine, yielding dephospho-CoA (dPCoA) and pyrophosphate. The protein is Phosphopantetheine adenylyltransferase of Shewanella piezotolerans (strain WP3 / JCM 13877).